The sequence spans 425 residues: D-amino acid dehydrogenase 2 (425 aa).

3–17 lines the FAD pocket; sequence ITVVGAGIVGISTAY.

It belongs to the DadA oxidoreductase family. FAD serves as cofactor.

The enzyme catalyses a D-alpha-amino acid + A + H2O = a 2-oxocarboxylate + AH2 + NH4(+). Functionally, oxidative deamination of D-amino acids. The protein is D-amino acid dehydrogenase 2 (dadA2) of Ralstonia nicotianae (strain ATCC BAA-1114 / GMI1000) (Ralstonia solanacearum).